The primary structure comprises 493 residues: MISSKPRLVVPYGLKTLLEGISRAVLKTNPSNINQFAAAYFQELTMYRGNTTMDIKDLVKQFHQIKVEKWSEGTTPQKKLECLKEPGKTSVESKVPTQMEKSTDTDEDNVTRTEYSDKTTQFPSVYAVPGTEQTEAVGGLSSKPATPKTTTPPSSPPPTAVSPEFAYVPADPAQLAAQMLGKVSSIHSDQSDVLMVDVATSMPVVIKEVPSSEAAEDVMVAAPLVCSGKVLEVQVVNQTSVHVDLGSQPKENEAEPSTASSVPLQDEQEPPAYDQAPEVTLQADIEVMSTVHISSVYNDVPVTEGVVYIEQLPEQIVIPFTDQVACLKENEQSKENEQSPRVSPKSVVEKTTSGMSKKSVESVKLAQLEENAKYSSVYMEAEATALLSDTSLKGQPEVPAQLLDAEGAIKIGSEKSLHLEVEITSIVSDNTGQEESGENSVPQEMEGKPVLSGEAAEAVHSGTSVKSSSGPFPPAPEGLTAPEIEPEGESTAE.

Residues 12–49 (YGLKTLLEGISRAVLKTNPSNINQFAAAYFQELTMYRG) enclose the RIIa domain. 4 disordered regions span residues 85 to 164 (EPGK…VSPE), 244 to 271 (DLGS…QEPP), 330 to 354 (NEQS…TTSG), and 426 to 493 (IVSD…STAE). Residues 90 to 100 (SVESKVPTQME) are compositionally biased toward polar residues. Over residues 101-117 (KSTDTDEDNVTRTEYSD) the composition is skewed to basic and acidic residues. The segment covering 141-152 (SSKPATPKTTTP) has biased composition (low complexity). At Thr-151 the chain carries Phosphothreonine. Ser-155 is subject to Phosphoserine. Composition is skewed to polar residues over residues 426–442 (IVSD…NSVP) and 461–470 (SGTSVKSSSG). The span at 484 to 493 (IEPEGESTAE) shows a compositional bias: acidic residues.

Interacts with FSCB. Isoform 3 self-associates. Isoform 3 and isoform 5 interact with GSK3B. Isoform 1 does not interact with GSK3B. In terms of processing, isoform 1 is phosphorylated on tyrosine residues during in vitro capacitation. Isoform 3 and isoform 5 are phosphorylated by GSK3B in vitro. Dephosphorylation affects its ability to bind calcium. Expressed in elongating spermatids and spermatozoa (at protein level). Isoform 1 is expressed in testis. Isoform 3 and isoform 5 are also expressed in brain, pancreas and numerous brain tumors.

The protein localises to the cytoplasm. It is found in the cytoskeleton. Its subcellular location is the cell projection. It localises to the cilium. The protein resides in the flagellum. The protein localises to the nucleus. Its function is as follows. May function as a regulator of both motility- and head-associated functions such as capacitation and the acrosome reaction. Isoform 1 binds calcium in vitro. Isoform 2 and isoform 6 probably bind calcium. Isoform 3 and isoform 5 do not bind calcium in vitro. Isoform 4 probably does not bind calcium. This is Calcium-binding tyrosine phosphorylation-regulated protein (CABYR) from Homo sapiens (Human).